We begin with the raw amino-acid sequence, 446 residues long: N-succinylarginine dihydrolase (446 aa).

Residues Ala-19 to Ser-28, Asn-110, and His-137 to Arg-138 contribute to the substrate site. Glu-174 is a catalytic residue. Substrate is bound at residue Arg-213. The active site involves His-249. Substrate-binding residues include Asp-251 and Asn-364. Cys-370 acts as the Nucleophile in catalysis.

This sequence belongs to the succinylarginine dihydrolase family. In terms of assembly, homodimer.

The enzyme catalyses N(2)-succinyl-L-arginine + 2 H2O + 2 H(+) = N(2)-succinyl-L-ornithine + 2 NH4(+) + CO2. It participates in amino-acid degradation; L-arginine degradation via AST pathway; L-glutamate and succinate from L-arginine: step 2/5. Its function is as follows. Catalyzes the hydrolysis of N(2)-succinylarginine into N(2)-succinylornithine, ammonia and CO(2). The polypeptide is N-succinylarginine dihydrolase (Burkholderia mallei (strain NCTC 10247)).